The following is a 154-amino-acid chain: Endoribonuclease YbeY (154 aa).

Zn(2+)-binding residues include His-113, His-117, and His-123.

The protein belongs to the endoribonuclease YbeY family. It depends on Zn(2+) as a cofactor.

The protein resides in the cytoplasm. Its function is as follows. Single strand-specific metallo-endoribonuclease involved in late-stage 70S ribosome quality control and in maturation of the 3' terminus of the 16S rRNA. This chain is Endoribonuclease YbeY, found in Ehrlichia canis (strain Jake).